Consider the following 25-residue polypeptide: uncharacterized protein (25 aa).

This is an uncharacterized protein from Escherichia coli (Bacteriophage T3).